We begin with the raw amino-acid sequence, 159 residues long: D-aminoacyl-tRNA deacylase (159 aa).

Positions 146–147 (GP) match the Gly-cisPro motif, important for rejection of L-amino acids motif.

The protein belongs to the DTD family. As to quaternary structure, homodimer.

It is found in the cytoplasm. The catalysed reaction is glycyl-tRNA(Ala) + H2O = tRNA(Ala) + glycine + H(+). It carries out the reaction a D-aminoacyl-tRNA + H2O = a tRNA + a D-alpha-amino acid + H(+). Its function is as follows. An aminoacyl-tRNA editing enzyme that deacylates mischarged D-aminoacyl-tRNAs. Also deacylates mischarged glycyl-tRNA(Ala), protecting cells against glycine mischarging by AlaRS. Acts via tRNA-based rather than protein-based catalysis; rejects L-amino acids rather than detecting D-amino acids in the active site. By recycling D-aminoacyl-tRNA to D-amino acids and free tRNA molecules, this enzyme counteracts the toxicity associated with the formation of D-aminoacyl-tRNA entities in vivo and helps enforce protein L-homochirality. This is D-aminoacyl-tRNA deacylase from Bifidobacterium animalis subsp. lactis (strain AD011).